The primary structure comprises 42 residues: Large ribosomal subunit protein P2 (42 aa).

The protein belongs to the eukaryotic ribosomal protein P1/P2 family. As to quaternary structure, P1 and P2 exist as dimers at the large ribosomal subunit. In terms of processing, phosphorylated.

In terms of biological role, plays an important role in the elongation step of protein synthesis. This is Large ribosomal subunit protein P2 from Triticum aestivum (Wheat).